A 70-amino-acid polypeptide reads, in one-letter code: Consomatin Mrc3 (70 aa).

The signal sequence occupies residues 1 to 22 (MQTAYWVMVMMMVWITAPLSEG). A propeptide spanning residues 23-55 (GKLNDVIRGLVPDDVTPKRILQSLISRRRFDGR) is cleaved from the precursor. C62 and C67 are disulfide-bonded. At W64 the chain carries D-tryptophan. Position 68 is a 4-hydroxyproline (P68). Y69 bears the Tyrosine amide mark.

This sequence belongs to the conotoxin C superfamily. Consomatin family. As to expression, expressed by the venom duct.

Its subcellular location is the secreted. Its function is as follows. Moderately activates human somatostatin receptors (SSTR) with a preferential activation of SSTR1 and SSTR4. In vivo, does not cause behavioral changes in mice within a few minutes of intracranial injection, but causes a progressive loss of movement thereafter. Four to five hours after injection, mice recover, even with the highest dose tested. Shows antinociception and antihyperalgesia activities in two mouse models of acute pain, most probably by acting outside the central nervous system. This chain is Consomatin Mrc3, found in Conus mercator (Trader cone).